A 278-amino-acid chain; its full sequence is Esterase dbaE (278 aa).

Catalysis depends on charge relay system residues S124, D220, and H248.

This sequence belongs to the LovG family.

The protein operates within secondary metabolite biosynthesis. Functionally, esterase; part of the gene cluster that mediates the biosynthesis of the antibiotic 2,4-dihydroxy-3-methyl-6-(2-oxopropyl)benzaldehyde (DHMBA) and its derivatives. The direct non-reducing polyketide synthase dbaI product is 2,4-dihydroxy-3-methyl-6-(2-oxopropyl)benzaldehyde (DHMBA), produced by condensation of one acetyl-CoA starter unit with 4 malonyl-CoA units and one methylation step. The FAD-dependent monooxygenase dbaH is responsible for the synthesis of yellow pigments derived from the oxidation of DHMBA. The roles of dbaB, C, E and F have still to be determined. This chain is Esterase dbaE, found in Emericella nidulans (strain FGSC A4 / ATCC 38163 / CBS 112.46 / NRRL 194 / M139) (Aspergillus nidulans).